Consider the following 160-residue polypeptide: 6,7-dimethyl-8-ribityllumazine synthase (160 aa).

Residues Trp27, 59-61, and 81-83 each bind 5-amino-6-(D-ribitylamino)uracil; these read AIE and VVI. 86 to 87 contacts (2S)-2-hydroxy-3-oxobutyl phosphate; sequence DT. Residue His89 is the Proton donor of the active site. Position 114 (Asn114) interacts with 5-amino-6-(D-ribitylamino)uracil. Arg128 contacts (2S)-2-hydroxy-3-oxobutyl phosphate.

Belongs to the DMRL synthase family. As to quaternary structure, homopentamer.

The catalysed reaction is (2S)-2-hydroxy-3-oxobutyl phosphate + 5-amino-6-(D-ribitylamino)uracil = 6,7-dimethyl-8-(1-D-ribityl)lumazine + phosphate + 2 H2O + H(+). Its pathway is cofactor biosynthesis; riboflavin biosynthesis; riboflavin from 2-hydroxy-3-oxobutyl phosphate and 5-amino-6-(D-ribitylamino)uracil: step 1/2. Catalyzes the formation of 6,7-dimethyl-8-ribityllumazine by condensation of 5-amino-6-(D-ribitylamino)uracil with 3,4-dihydroxy-2-butanone 4-phosphate. This is the penultimate step in the biosynthesis of riboflavin. This chain is 6,7-dimethyl-8-ribityllumazine synthase, found in Mycobacterium leprae (strain Br4923).